The sequence spans 739 residues: Lysyl oxidase homolog 3A (739 aa).

A signal peptide spans 1 to 25 (MLRSELRDMVVAMVLWGILLPFCLS). SRCR domains follow at residues 38-139 (FRLA…VICK), 166-272 (LRPL…VSCV), 293-393 (MRLK…VICN), and 403-511 (MRLT…VICS). Intrachain disulfides connect C64–C128, C77–C138, C108–C118, C196–C261, C209–C271, C238–C248, C318–C382, C331–C392, C362–C372, C433–C497, C446–C510, and C479–C489. N-linked (GlcNAc...) asparagine glycosylation occurs at N256. A glycan (N-linked (GlcNAc...) asparagine) is linked at N468. The N-linked (GlcNAc...) asparagine glycan is linked to N611. The lysine tyrosylquinone (Lys-Tyr) cross-link spans 620-656 (KASFCLEDTECHEGVSKRYECANFGEQGITVGCWDLY). Residue Y656 is modified to 2',4',5'-topaquinone.

The protein belongs to the lysyl oxidase family. Cu cation is required as a cofactor. The cofactor is lysine tyrosylquinone residue. Post-translationally, the lysine tyrosylquinone cross-link (LTQ) is generated by condensation of the epsilon-amino group of a lysine with a topaquinone produced by oxidation of tyrosine.

The protein localises to the secreted. Its subcellular location is the extracellular space. It is found in the cytoplasm. The protein resides in the nucleus. The enzyme catalyses L-lysyl-[protein] + O2 + H2O = (S)-2-amino-6-oxohexanoyl-[protein] + H2O2 + NH4(+). It carries out the reaction N(6)-acetyl-L-lysyl-[protein] + O2 + H2O = acetamide + (S)-2-amino-6-oxohexanoyl-[protein] + H2O2. In terms of biological role, protein-lysine 6-oxidase that mediates the oxidation of peptidyl lysine residues to allysine in target proteins. Catalyzes the post-translational oxidative deamination of peptidyl lysine residues in precursors of elastin and different types of collagens, a prerequisite in the formation of cross-links between collagens and elastin. Can mediate oxidation of lysine residues that are acetylated. Also able to catalyze deacetylation of lysine residues. The chain is Lysyl oxidase homolog 3A from Danio rerio (Zebrafish).